We begin with the raw amino-acid sequence, 100 residues long: Small cysteine and glycine repeat-containing protein 3 (100 aa).

The 13 X 2 AA repeats of CG stretch occupies residues C4–G82.

The protein belongs to the KRTAP type 28 family.

In the hair cortex, hair keratin intermediate filaments are embedded in an interfilamentous matrix, consisting of hair keratin-associated proteins (KRTAP), which are essential for the formation of a rigid and resistant hair shaft through their extensive disulfide bond cross-linking with abundant cysteine residues of hair keratins. The matrix proteins include the high-sulfur and high-glycine-tyrosine keratins. This is Small cysteine and glycine repeat-containing protein 3 from Homo sapiens (Human).